We begin with the raw amino-acid sequence, 364 residues long: Sulfate/thiosulfate import ATP-binding protein CysA (364 aa).

The ABC transporter domain occupies 3 to 237 (IEIARIKKSF…PATRFVLEFM (235 aa)). 35–42 (GPSGSGKT) serves as a coordination point for ATP.

The protein belongs to the ABC transporter superfamily. Sulfate/tungstate importer (TC 3.A.1.6) family. As to quaternary structure, the complex is composed of two ATP-binding proteins (CysA), two transmembrane proteins (CysT and CysW) and a solute-binding protein (CysP).

The protein localises to the cell inner membrane. It carries out the reaction sulfate(out) + ATP + H2O = sulfate(in) + ADP + phosphate + H(+). The catalysed reaction is thiosulfate(out) + ATP + H2O = thiosulfate(in) + ADP + phosphate + H(+). Its function is as follows. Part of the ABC transporter complex CysAWTP involved in sulfate/thiosulfate import. Responsible for energy coupling to the transport system. The protein is Sulfate/thiosulfate import ATP-binding protein CysA of Salmonella typhi.